Reading from the N-terminus, the 300-residue chain is Spermine synthase SPE4 (300 aa).

S5 carries the post-translational modification Phosphoserine. The PABS domain maps to 12-255 (DGWFREINDK…GQLGLIVCSN (244 aa)). S-adenosyl 3-(methylsulfanyl)propylamine is bound by residues Q44, D99, E119, and 151-152 (DG). D174 functions as the Proton acceptor in the catalytic mechanism. Residue D177 participates in spermidine binding.

It belongs to the spermidine/spermine synthase family.

It catalyses the reaction S-adenosyl 3-(methylsulfanyl)propylamine + spermidine = spermine + S-methyl-5'-thioadenosine + H(+). The protein operates within amine and polyamine biosynthesis; spermine biosynthesis; spermine from spermidine: step 1/1. This chain is Spermine synthase SPE4 (SPE4), found in Saccharomyces cerevisiae (strain ATCC 204508 / S288c) (Baker's yeast).